The sequence spans 904 residues: Protein translocase subunit SecA (904 aa).

ATP-binding positions include Gln87, 105–109 (GEGKT), and Asp512. A disordered region spans residues 851-904 (LAKQQQLSHESDNSALMSQEEANVAASLERKVGRNDPCPCGSGKKYKQCHGRLQ). The span at 853-871 (KQQQLSHESDNSALMSQEE) shows a compositional bias: polar residues. 4 residues coordinate Zn(2+): Cys888, Cys890, Cys899, and His900. Residues 894–904 (KKYKQCHGRLQ) show a composition bias toward basic residues.

It belongs to the SecA family. Monomer and homodimer. Part of the essential Sec protein translocation apparatus which comprises SecA, SecYEG and auxiliary proteins SecDF-YajC and YidC. Zn(2+) serves as cofactor.

The protein resides in the cell inner membrane. It is found in the cytoplasm. The catalysed reaction is ATP + H2O + cellular proteinSide 1 = ADP + phosphate + cellular proteinSide 2.. Its function is as follows. Part of the Sec protein translocase complex. Interacts with the SecYEG preprotein conducting channel. Has a central role in coupling the hydrolysis of ATP to the transfer of proteins into and across the cell membrane, serving both as a receptor for the preprotein-SecB complex and as an ATP-driven molecular motor driving the stepwise translocation of polypeptide chains across the membrane. In Yersinia enterocolitica serotype O:8 / biotype 1B (strain NCTC 13174 / 8081), this protein is Protein translocase subunit SecA.